Reading from the N-terminus, the 211-residue chain is MSFKTAEVSSLAERINWEKVDGLVPAIVQDFQSSQVLMMGYMNQEALVKTGETGQVTFFSRTKERLWTKGETSGNVLQLVNMSLDCDNDTLLVKVNPIGPTCHTGTTTCWDGDPQEESQMVWLHQLEQLLAARKSAGPDSSYTASLYARGTKRISQKVGEEGVEVALAATSGDKAELVCESADLIYHLLVLLQDQGLSMNDVINKLKERHK.

Positions 1 to 122 are phosphoribosyl-AMP cyclohydrolase; it reads MSFKTAEVSS…DPQEESQMVW (122 aa). A phosphoribosyl-ATP pyrophosphohydrolase region spans residues 123–211; it reads LHQLEQLLAA…VINKLKERHK (89 aa).

In the N-terminal section; belongs to the PRA-CH family. The protein in the C-terminal section; belongs to the PRA-PH family.

The protein resides in the cytoplasm. It catalyses the reaction 1-(5-phospho-beta-D-ribosyl)-ATP + H2O = 1-(5-phospho-beta-D-ribosyl)-5'-AMP + diphosphate + H(+). The catalysed reaction is 1-(5-phospho-beta-D-ribosyl)-5'-AMP + H2O = 1-(5-phospho-beta-D-ribosyl)-5-[(5-phospho-beta-D-ribosylamino)methylideneamino]imidazole-4-carboxamide. Its pathway is amino-acid biosynthesis; L-histidine biosynthesis; L-histidine from 5-phospho-alpha-D-ribose 1-diphosphate: step 2/9. It functions in the pathway amino-acid biosynthesis; L-histidine biosynthesis; L-histidine from 5-phospho-alpha-D-ribose 1-diphosphate: step 3/9. In Vibrio vulnificus (strain CMCP6), this protein is Histidine biosynthesis bifunctional protein HisIE.